Here is a 245-residue protein sequence, read N- to C-terminus: 23S rRNA (guanosine-2'-O-)-methyltransferase RlmB (245 aa).

S-adenosyl-L-methionine is bound by residues G197, I217, and L226.

Belongs to the class IV-like SAM-binding methyltransferase superfamily. RNA methyltransferase TrmH family. RlmB subfamily.

It localises to the cytoplasm. It carries out the reaction guanosine(2251) in 23S rRNA + S-adenosyl-L-methionine = 2'-O-methylguanosine(2251) in 23S rRNA + S-adenosyl-L-homocysteine + H(+). Its function is as follows. Specifically methylates the ribose of guanosine 2251 in 23S rRNA. The protein is 23S rRNA (guanosine-2'-O-)-methyltransferase RlmB of Bordetella parapertussis (strain 12822 / ATCC BAA-587 / NCTC 13253).